The sequence spans 263 residues: Shikimate dehydrogenase (NADP(+)) (263 aa).

Residues 14-16 and Thr-60 contribute to the shikimate site; that span reads SLS. The active-site Proton acceptor is the Lys-64. Shikimate is bound by residues Asn-85 and Asp-100. Residues 123–127, 146–151, and Leu-205 each bind NADP(+); these read GAGGA and NRTPQR. Tyr-207 contributes to the shikimate binding site. Gly-228 provides a ligand contact to NADP(+). Gln-235 provides a ligand contact to shikimate.

It belongs to the shikimate dehydrogenase family. Homodimer.

The catalysed reaction is shikimate + NADP(+) = 3-dehydroshikimate + NADPH + H(+). The protein operates within metabolic intermediate biosynthesis; chorismate biosynthesis; chorismate from D-erythrose 4-phosphate and phosphoenolpyruvate: step 4/7. Its function is as follows. Involved in the biosynthesis of the chorismate, which leads to the biosynthesis of aromatic amino acids. Catalyzes the reversible NADPH linked reduction of 3-dehydroshikimate (DHSA) to yield shikimate (SA). The polypeptide is Shikimate dehydrogenase (NADP(+)) (Thermus thermophilus (strain ATCC 27634 / DSM 579 / HB8)).